A 300-amino-acid chain; its full sequence is Cation-efflux pump FieF (300 aa).

The chain crosses the membrane as a helical span at residues 24–44; that stretch reads LLIKILAWWYTGSVSILAALV. Zn(2+)-binding residues include Asp45 and Asp49. 2 helical membrane-spanning segments follow: residues 82 to 102 and 114 to 134; these read AALAQSMFISGSALFLFLTSI and PGVGIGVTVIALICTIILVTF. His153 and Asp157 together coordinate Zn(2+). The next 2 helical transmembrane spans lie at 156–176 and 178–198; these read SDVMMNGAILIALGLSWYGWH and ADALFALGIGIYILYSALRMG.

Belongs to the cation diffusion facilitator (CDF) transporter (TC 2.A.4) family. FieF subfamily. In terms of assembly, homodimer.

It localises to the cell inner membrane. The enzyme catalyses Zn(2+)(in) + H(+)(out) = Zn(2+)(out) + H(+)(in). It carries out the reaction Cd(2+)(in) + H(+)(out) = Cd(2+)(out) + H(+)(in). It catalyses the reaction Fe(2+)(in) + H(+)(out) = Fe(2+)(out) + H(+)(in). Its function is as follows. Divalent metal cation transporter which exports Zn(2+), Cd(2+) and possibly Fe(2+). May be involved in zinc and iron detoxification by efflux. The polypeptide is Cation-efflux pump FieF (Salmonella agona (strain SL483)).